Here is a 467-residue protein sequence, read N- to C-terminus: Mothers against decapentaplegic homolog 2 (467 aa).

N-acetylserine is present on Ser2. Thr8 is subject to Phosphothreonine. Residues 10–176 (PVVKRLLGWK…YQRVETPVLP (167 aa)) form the MH1 domain. At Lys19 the chain carries N6-acetyllysine. Residues Cys74, Cys149, Cys161, and His166 each contribute to the Zn(2+) site. Polar residues predominate over residues 207-217 (PAGIEPQSNYI). Residues 207–251 (PAGIEPQSNYIPETPPPGYISEDGETSDQQLNQSMDTGSPAELSP) form a disordered region. Thr220 is modified (phosphothreonine). The PY-motif signature appears at 221–225 (PPPGY). Polar residues predominate over residues 233–243 (SDQQLNQSMDT). The residue at position 240 (Ser240) is a Phosphoserine; by CAMK2. A phosphoserine mark is found at Ser245, Ser250, Ser255, Ser458, Ser460, and Ser464. In terms of domain architecture, MH2 spans 274-467 (WCSIAYYELN…SPSVRCSSMS (194 aa)). Ser465 and Ser467 each carry phosphoserine; by TGFBR1.

The protein belongs to the dwarfin/SMAD family. Monomer; in the absence of TGF-beta. Heterodimer; in the presence of TGF-beta. Forms a heterodimer with co-SMAD, SMAD4, in the nucleus to form the transactivation complex SMAD2/SMAD4. Found in a complex with SMAD3 and TRIM33 upon addition of TGF-beta. Identified in a complex that contains at least ZNF451, SMAD2, SMAD3 and SMAD4. Interacts (via the MH2 domain) with ZFYVE9; may form trimers with the SMAD4 co-SMAD. Interacts with TAZ/WWRT1. Interacts with FOXH1. Interacts with SNW1. Interacts with CREB-binding protein (CBP) and EP300. Interacts with SNON. Interacts with ALK4/ACVR1B. Interacts with SKOR1. Interacts with SKOR2. Interacts with PRDM16. Interacts (via MH2 domain) with LEMD3. Interacts with RBPMS. Interacts with WWP1. Interacts (dephosphorylated form, via the MH1 and MH2 domains) with RANBP3 (via its C-terminal R domain); the interaction results in the export of dephosphorylated SMAD3 out of the nucleus and termination of the TGF-beta signaling. Interacts with PDPK1 (via PH domain). Interacts with DAB2; the interactions are enhanced upon TGF-beta stimulation. Interacts with USP15. Interacts with PPP5C. Interacts with LDLRAD4 (via the SMAD interaction motif). Interacts (via MH2 domain) with PMEPA1 (via the SMAD interaction motif). Interacts with ZFHX3. Interacts with ZNF451. Interacts with SMURF2 when phosphorylated on Ser-465/467. Interacts with PPM1A. Interacts with TGF-beta. Interacts with TGFBR1. Interacts with TGIF. Interacts with SMAD3 and TRIM33. Interacts with ZNF580. Interacts with NEDD4L in response to TGF-beta. Interacts with HGS. Interacts with AIP1. Interacts with WWP1. Interacts with PML. Interacts weakly with ZNF8. Interacts (when phosphorylated) with RNF111; RNF111 acts as an enhancer of the transcriptional responses by mediating ubiquitination and degradation of SMAD2 inhibitors. Interacts with YAP1 (when phosphorylated at 'Ser-112'). Interacts when phosphorylated with IPO7; the interaction facilitates translocation of SMAD2 to the nucleus. Interacts with MTMR4; negatively regulates TGF-beta signaling through SMAD2 dephosphorylation and retention in endosomes. Post-translationally, in response to TGF-beta, phosphorylated on the C-terminal SXS motif by TGF-beta and activin type 1 receptor kinases, phosphorylation declines progressively in a KMT5A-dependent manner. Phosphorylation in this motif is required for interaction with a number of proteins including SMURF2, SNON and SMAD4 in response to TGF-beta. Dephosphorylated in this motif by PPM1A leading to disruption of the SMAD2/3-SMAD4 complex, nuclear export and termination of the TGF-beta signaling. In response to decorin, the naturally occurring inhibitor of TGF-beta signaling, phosphorylated on Ser-240 by CaMK2. Phosphorylated by MAPK3 upon EGF stimulation; which increases transcriptional activity and stability, and is blocked by calmodulin. Phosphorylated by PDPK1. In response to TGF-beta, ubiquitinated by NEDD4L; which promotes its degradation. Monoubiquitinated, leading to prevent DNA-binding. Deubiquitination by USP15 alleviates inhibition and promotes activation of TGF-beta target genes. Ubiquitinated by RNF111, leading to its degradation: only SMAD2 proteins that are 'in use' are targeted by RNF111, RNF111 playing a key role in activating SMAD2 and regulating its turnover. In terms of processing, acetylated on Lys-19 by coactivators in response to TGF-beta signaling, which increases transcriptional activity.

It is found in the cytoplasm. It localises to the nucleus. Its function is as follows. Receptor-regulated SMAD (R-SMAD) that is an intracellular signal transducer and transcriptional modulator activated by TGF-beta (transforming growth factor) and activin type 1 receptor kinases. Binds the TRE element in the promoter region of many genes that are regulated by TGF-beta and, on formation of the SMAD2/SMAD4 complex, activates transcription. Promotes TGFB1-mediated transcription of odontoblastic differentiation genes in dental papilla cells. Positively regulates PDPK1 kinase activity by stimulating its dissociation from the 14-3-3 protein YWHAQ which acts as a negative regulator. The chain is Mothers against decapentaplegic homolog 2 (Smad2) from Mus musculus (Mouse).